A 260-amino-acid chain; its full sequence is 2-amino-3,7-dideoxy-D-threo-hept-6-ulosonate synthase 1 (260 aa).

Catalysis depends on Asp26, which acts as the Proton acceptor. 1-deoxy-D-threo-hexo-2,5-diulose 6-phosphate-binding positions include 26 to 30 (DHGIT) and 144 to 146 (YPR). Tyr144 serves as the catalytic Proton donor. Residue Lys172 is the Schiff-base intermediate with substrate of the active site. Residues 194-195 (GG) and 221-222 (GR) each bind 1-deoxy-D-threo-hexo-2,5-diulose 6-phosphate.

This sequence belongs to the DeoC/FbaB aldolase family. ADHS subfamily. As to quaternary structure, homodecamer.

The catalysed reaction is 1-deoxy-D-threo-hexo-2,5-diulose 6-phosphate + L-aspartate 4-semialdehyde = 2,3-dioxopropyl phosphate + 2-amino-2,3,7-trideoxy-D-lyxo-hept-6-ulosonate. In terms of biological role, catalyzes a transaldol reaction between 6-deoxy-5-ketofructose 1-phosphate (DKFP) and L-aspartate semialdehyde (ASA) with an elimination of hydroxypyruvaldehyde phosphate to yield 2-amino-3,7-dideoxy-D-threo-hept-6-ulosonate (ADH). Plays a key role in an alternative pathway of the biosynthesis of 3-dehydroquinate (DHQ), which is involved in the canonical pathway for the biosynthesis of aromatic amino acids. In Archaeoglobus fulgidus (strain ATCC 49558 / DSM 4304 / JCM 9628 / NBRC 100126 / VC-16), this protein is 2-amino-3,7-dideoxy-D-threo-hept-6-ulosonate synthase 1.